Here is a 163-residue protein sequence, read N- to C-terminus: Transcriptional repressor NrdR (163 aa).

The interval 1–22 (MRCPKCQSLKSSVIDSRQAEDG) is disordered. The segment at 3–34 (CPKCQSLKSSVIDSRQAEDGNTIRRRRSCDQC) is a zinc-finger region. Positions 49–139 (LVVVKKDGTR…VYRSFKDVGE (91 aa)) constitute an ATP-cone domain.

Belongs to the NrdR family. It depends on Zn(2+) as a cofactor.

Negatively regulates transcription of bacterial ribonucleotide reductase nrd genes and operons by binding to NrdR-boxes. In Streptococcus suis (strain 98HAH33), this protein is Transcriptional repressor NrdR.